The following is a 288-amino-acid chain: Phenazine biosynthesis-like domain-containing protein (288 aa).

Glu46 is an active-site residue.

It belongs to the PhzF family. Interacts with UNRIP/MAWD.

The polypeptide is Phenazine biosynthesis-like domain-containing protein (PBLD) (Bos taurus (Bovine)).